The chain runs to 852 residues: Thrombospondin type-1 domain-containing protein 1 (852 aa).

The N-terminal stretch at 1-24 (MKPMLKDFSNLLLVVLCDYVLGEA) is a signal peptide. Residues 25 to 413 (EYLLLREPGH…QPQGPVKSNN (389 aa)) lie on the Extracellular side of the membrane. N-linked (GlcNAc...) asparagine glycosylation is found at N39, N53, N58, N69, N80, N135, and N304. Positions 340–393 (TETWGLWQPWSQCSATCGDGVRERRRVCLTSFPSSPVCPGMSLEASLCSLEECA) constitute a TSP type-1 domain. Disulfide bonds link C352-C387, C356-C392, and C367-C377. The helical transmembrane segment at 414–434 (IVTVTGISLCLFIIIATVLIT) threads the bilayer. The Cytoplasmic portion of the chain corresponds to 435–852 (LWRRFGRPAK…STLSVEKLVI (418 aa)). Disordered stretches follow at residues 444-517 (KCST…ESFQ) and 624-799 (LIRK…RKDK). S463 is subject to Phosphoserine. Basic residues predominate over residues 645 to 654 (ARNAHFRRTA). Residues 655–669 (SFHEARQARPFRERS) show a composition bias toward basic and acidic residues. The segment covering 670-685 (MSTLTPRQAPAYSSRT) has biased composition (polar residues). The span at 686 to 696 (RTCEQAEDRFR) shows a compositional bias: basic and acidic residues. Composition is skewed to polar residues over residues 766-778 (SHKSVSRKQSSPI) and 785-794 (QRVSSLSPSQ).

As to quaternary structure, part of a complex composed of THSD1, PTK2/FAK1, TLN1 and VCL. Interacts with TLN1.

The protein localises to the endosome membrane. It is found in the cell junction. It localises to the focal adhesion. The protein resides in the membrane. Its subcellular location is the secreted. Its function is as follows. Is a positive regulator of nascent focal adhesion assembly, involved in the modulation of endothelial cell attachment to the extracellular matrix. The sequence is that of Thrombospondin type-1 domain-containing protein 1 (THSD1) from Homo sapiens (Human).